Consider the following 1070-residue polypeptide: Probable arabinosyltransferase C (1070 aa).

The next 12 helical transmembrane spans lie at 10–32 (IARLLAVIAGLLGALLAMATPFL), 210–232 (LLKTIAMILGVVLTIVALVALHL), 247–269 (SRWWSIGCLDGLVITILAWWHFV), 399–421 (VATSRLLPVAVACIVGALTLFSG), 425–442 (IASIGALLVAVGPLLTIL), 449–471 (FGAVPLVAPILAASTVTAILIFR), 512–534 (SVARRFAVLALLVALSVAVAMSL), 547–564 (SRRIIGITVTSFLAMMFT), 574–596 (VFAGLAGSLGALAAVAVASAALR), 603–625 (VFAAVVLFVVALSFASVNGWWYV), 645–664 (TALLELTVIVLLLAAWFHFV), and 685–707 (SPIAIATWSLVIFEVASLTMAMI).

The protein belongs to the emb family.

Its subcellular location is the cell membrane. In terms of biological role, arabinosyl transferase responsible for the polymerization of arabinose into the arabinan of arabinogalactan. The protein is Probable arabinosyltransferase C (embC) of Mycobacterium leprae (strain TN).